The chain runs to 210 residues: Ribosomal RNA small subunit methyltransferase G (210 aa).

S-adenosyl-L-methionine is bound by residues Gly76, Leu81, 127-128 (VE), and Arg142.

Belongs to the methyltransferase superfamily. RNA methyltransferase RsmG family.

The protein localises to the cytoplasm. It carries out the reaction guanosine(527) in 16S rRNA + S-adenosyl-L-methionine = N(7)-methylguanosine(527) in 16S rRNA + S-adenosyl-L-homocysteine. In terms of biological role, specifically methylates the N7 position of guanine in position 527 of 16S rRNA. In Vibrio cholerae serotype O1 (strain ATCC 39315 / El Tor Inaba N16961), this protein is Ribosomal RNA small subunit methyltransferase G.